A 629-amino-acid chain; its full sequence is DNA mismatch repair protein MutL (629 aa).

It belongs to the DNA mismatch repair MutL/HexB family.

In terms of biological role, this protein is involved in the repair of mismatches in DNA. It is required for dam-dependent methyl-directed DNA mismatch repair. May act as a 'molecular matchmaker', a protein that promotes the formation of a stable complex between two or more DNA-binding proteins in an ATP-dependent manner without itself being part of a final effector complex. The sequence is that of DNA mismatch repair protein MutL from Rhodospirillum rubrum (strain ATCC 11170 / ATH 1.1.1 / DSM 467 / LMG 4362 / NCIMB 8255 / S1).